We begin with the raw amino-acid sequence, 142 residues long: ATP synthase epsilon chain (142 aa).

The protein belongs to the ATPase epsilon chain family. As to quaternary structure, F-type ATPases have 2 components, CF(1) - the catalytic core - and CF(0) - the membrane proton channel. CF(1) has five subunits: alpha(3), beta(3), gamma(1), delta(1), epsilon(1). CF(0) has three main subunits: a, b and c.

The protein localises to the cell inner membrane. Its function is as follows. Produces ATP from ADP in the presence of a proton gradient across the membrane. This Shewanella sp. (strain ANA-3) protein is ATP synthase epsilon chain.